Here is a 219-residue protein sequence, read N- to C-terminus: Uracil-DNA glycosylase (219 aa).

The active-site Proton acceptor is the Asp61.

It belongs to the uracil-DNA glycosylase (UDG) superfamily. UNG family.

The protein localises to the cytoplasm. The enzyme catalyses Hydrolyzes single-stranded DNA or mismatched double-stranded DNA and polynucleotides, releasing free uracil.. Excises uracil residues from the DNA which can arise as a result of misincorporation of dUMP residues by DNA polymerase or due to deamination of cytosine. The polypeptide is Uracil-DNA glycosylase (Haemophilus influenzae (strain 86-028NP)).